The chain runs to 382 residues: Apolipoprotein A-IV (382 aa).

The N-terminal stretch at 1–20 (MFLRAVVLTLALVAVTGARA) is a signal peptide. Repeat copies occupy residues 33 to 54 (DYFSQLSNNAKEAVEHLQQSEL), 60 to 81 (ALFQDKLGQVNTYADNLQKKLV), 82 to 103 (PFATELHERLTKDSEKLKEEIR), 115 to 136 (PHANEVSQKIGDNVRELQQRLG), 137 to 158 (PYADELRTQVNTHAEHLRRHLT), 159 to 180 (SHAQRMEAVLRENVDNLQSSLT), 181 to 202 (PYADEFKAKIDRNIEELKGHLT), 203 to 224 (PYADELKVKIDQNVEELRRSLA), 225 to 246 (PYAQDVQEKLNHQLEGLAFQMK), 247 to 268 (KNAEELKAKITANADELRQRLA), 269 to 286 (PVVEDVRGKLRDNAKGLQ), 287 to 308 (ESLAQLNSHLDRQVEEFRHNMG), and 309 to 330 (PYGDTFNRALVQQVEELRQKLG). The tract at residues 33–330 (DYFSQLSNNA…QVEELRQKLG (298 aa)) is 13 X 22 AA approximate tandem repeats. The disordered stretch occupies residues 362-382 (ENQDMPLALPEQEQAPGPLES).

This sequence belongs to the apolipoprotein A1/A4/E family. As to quaternary structure, homodimer.

It localises to the secreted. Its function is as follows. May have a role in chylomicrons and VLDL secretion and catabolism. Required for efficient activation of lipoprotein lipase by ApoC-II; potent activator of LCAT. Apoa-IV is a major component of HDL and chylomicrons. This Acinonyx jubatus (Cheetah) protein is Apolipoprotein A-IV (APOA4).